The primary structure comprises 261 residues: Ribonuclease HII (261 aa).

One can recognise an RNase H type-2 domain in the interval 72–260 (AVICGIDEVG…IKSIVLEKLD (189 aa)). Positions 78, 79, and 170 each coordinate a divalent metal cation.

Belongs to the RNase HII family. It depends on Mn(2+) as a cofactor. Mg(2+) is required as a cofactor.

It localises to the cytoplasm. The catalysed reaction is Endonucleolytic cleavage to 5'-phosphomonoester.. Functionally, endonuclease that specifically degrades the RNA of RNA-DNA hybrids. The polypeptide is Ribonuclease HII (Staphylococcus carnosus (strain TM300)).